The following is a 33-amino-acid chain: Suppressor protein HFN40 (33 aa).

Functionally, suppresses expansion of husk leaf blades. In Zea mays (Maize), this protein is Suppressor protein HFN40.